The primary structure comprises 267 residues: Mitochondrial S-adenosylmethionine carrier protein (267 aa).

3 Solcar repeats span residues 4 to 77 (REFT…TKSV), 86 to 168 (LAPI…LKAV), and 177 to 265 (LDSW…VRRT). The next 6 membrane-spanning stretches (helical) occupy residues 5–25 (EFTA…LTLF), 49–69 (IYAG…AFFV), 85–105 (NLAP…ACLI), 142–162 (RGYG…FPLW), 182–202 (AAVC…PLDV), and 238–258 (FAGS…FLGA).

This sequence belongs to the mitochondrial carrier (TC 2.A.29) family.

It is found in the mitochondrion inner membrane. The enzyme catalyses S-adenosyl-L-homocysteine(out) + S-adenosyl-L-methionine(in) = S-adenosyl-L-homocysteine(in) + S-adenosyl-L-methionine(out). In terms of biological role, mitochondrial S-adenosyl-L-methionine/S-adenosyl-L-homocysteine antiporter. Mediates the exchange of cytosolic S-adenosyl-L-methionine, the predominant methyl-group donor for macromolecule methylation processes, for mitochondrial S-adenosylhomocysteine(SAH), a by-product of methylation reactions. This is Mitochondrial S-adenosylmethionine carrier protein (slc25a26) from Danio rerio (Zebrafish).